We begin with the raw amino-acid sequence, 92 residues long: UPF0250 protein Rmag_0541 (92 aa).

The protein belongs to the UPF0250 family.

The chain is UPF0250 protein Rmag_0541 from Ruthia magnifica subsp. Calyptogena magnifica.